Reading from the N-terminus, the 513-residue chain is Probable hydrolase YhcX (513 aa).

The region spanning 14 to 212 is the N-acetyltransferase domain; that stretch reads MVIRNIEEKD…YATLMEWNNV (199 aa). The 256-residue stretch at 229 to 484 folds into the CN hydrolase domain; sequence VRICVIQYEM…EMVVIGDVDL (256 aa). Residue Glu-270 is the Proton acceptor of the active site. Lys-345 acts as the Proton donor in catalysis. The active-site Nucleophile is Cys-379.

It belongs to the carbon-nitrogen hydrolase superfamily. NIT1/NIT2 family.

This Bacillus subtilis (strain 168) protein is Probable hydrolase YhcX (yhcX).